The primary structure comprises 227 residues: Orotidine 5'-phosphate decarboxylase (227 aa).

Residues aspartate 8, lysine 30, 58–67, threonine 117, arginine 177, glutamine 186, glycine 206, and arginine 207 contribute to the substrate site; that span reads DLKLYDIPNT. Lysine 60 serves as the catalytic Proton donor.

Belongs to the OMP decarboxylase family. Type 1 subfamily. As to quaternary structure, homodimer.

The enzyme catalyses orotidine 5'-phosphate + H(+) = UMP + CO2. Its pathway is pyrimidine metabolism; UMP biosynthesis via de novo pathway; UMP from orotate: step 2/2. In terms of biological role, catalyzes the decarboxylation of orotidine 5'-monophosphate (OMP) to uridine 5'-monophosphate (UMP). This Campylobacter lari (strain RM2100 / D67 / ATCC BAA-1060) protein is Orotidine 5'-phosphate decarboxylase.